Consider the following 114-residue polypeptide: Ribonuclease P protein component (114 aa).

This sequence belongs to the RnpA family. As to quaternary structure, consists of a catalytic RNA component (M1 or rnpB) and a protein subunit.

It catalyses the reaction Endonucleolytic cleavage of RNA, removing 5'-extranucleotides from tRNA precursor.. Its function is as follows. RNaseP catalyzes the removal of the 5'-leader sequence from pre-tRNA to produce the mature 5'-terminus. It can also cleave other RNA substrates such as 4.5S RNA. The protein component plays an auxiliary but essential role in vivo by binding to the 5'-leader sequence and broadening the substrate specificity of the ribozyme. This Legionella pneumophila (strain Lens) protein is Ribonuclease P protein component.